An 880-amino-acid polypeptide reads, in one-letter code: Alanine--tRNA ligase (880 aa).

Histidine 569, histidine 573, cysteine 671, and histidine 675 together coordinate Zn(2+).

The protein belongs to the class-II aminoacyl-tRNA synthetase family. As to quaternary structure, homotetramer. Zn(2+) serves as cofactor.

The protein localises to the cytoplasm. It catalyses the reaction tRNA(Ala) + L-alanine + ATP = L-alanyl-tRNA(Ala) + AMP + diphosphate. In terms of biological role, catalyzes the attachment of alanine to tRNA(Ala) in a two-step reaction: alanine is first activated by ATP to form Ala-AMP and then transferred to the acceptor end of tRNA(Ala). Also edits incorrectly charged Ser-tRNA(Ala) and Gly-tRNA(Ala) via its editing domain. The protein is Alanine--tRNA ligase of Buchnera aphidicola subsp. Baizongia pistaciae (strain Bp).